The primary structure comprises 310 residues: Beta-lactamase AST-1 (310 aa).

An N-terminal signal peptide occupies residues 1-31 (MTFSALPFRRADRRRLLAAALAACALTLTAA). Cys-32 is lipidated: N-palmitoyl cysteine. Cys-32 carries the S-diacylglycerol cysteine lipid modification. Ser-91 serves as the catalytic Acyl-ester intermediate. Ser-151 contributes to the substrate binding site. Glu-187 acts as the Proton acceptor in catalysis. 255 to 257 (KTG) contributes to the substrate binding site.

This sequence belongs to the class-A beta-lactamase family.

It is found in the cell membrane. It carries out the reaction a beta-lactam + H2O = a substituted beta-amino acid. With respect to regulation, inhibited by clavulanic acid. Its function is as follows. Confers high levels of resistance to amoxicillin, benzylpenicillin, piperacillin, ticarcillin and cephalothin. Not active against ceftazidime, cefotaxime and aztreonam. The chain is Beta-lactamase AST-1 (bla) from Nocardia asteroides.